Here is a 196-residue protein sequence, read N- to C-terminus: MVKIGVLGLQGAVREHVKSVEASGAEAVVVKRIEQLEEIDGLILPGGESTTMRRLIDKYDFMEPLRTFAKSGKPMFGTCAGMILLAKTLIGYDEAHIGAMDITVERNAFGRQKDSFEAALSIKGVGEDFVGVFIRAPYVVDVADDVEVLSTHGDRMVAVRQGPFLAASFHPELTDDHRVTAYFVEMVKEAKMKKVV.

An L-glutamine-binding site is contributed by 47-49; sequence GES. Cys-79 functions as the Nucleophile in the catalytic mechanism. L-glutamine-binding positions include Arg-106 and 134–135; that span reads IR. Residues His-170 and Glu-172 each act as charge relay system in the active site.

The protein belongs to the glutaminase PdxT/SNO family. In the presence of PdxS, forms a dodecamer of heterodimers. Only shows activity in the heterodimer.

It carries out the reaction aldehydo-D-ribose 5-phosphate + D-glyceraldehyde 3-phosphate + L-glutamine = pyridoxal 5'-phosphate + L-glutamate + phosphate + 3 H2O + H(+). It catalyses the reaction L-glutamine + H2O = L-glutamate + NH4(+). Its pathway is cofactor biosynthesis; pyridoxal 5'-phosphate biosynthesis. In terms of biological role, catalyzes the hydrolysis of glutamine to glutamate and ammonia as part of the biosynthesis of pyridoxal 5'-phosphate. The resulting ammonia molecule is channeled to the active site of PdxS. The chain is Pyridoxal 5'-phosphate synthase subunit PdxT from Bacillus thuringiensis subsp. konkukian (strain 97-27).